The sequence spans 419 residues: Farnesyl pyrophosphate synthase (419 aa).

At Met1 the chain carries N-acetylmethionine. 3 residues coordinate isopentenyl diphosphate: Lys123, Arg126, and Gln162. Lys123 carries the N6-(2-hydroxyisobutyryl)lysine; alternate modification. Lys123 carries the N6-acetyllysine; alternate modification. The Mg(2+) site is built by Asp169 and Asp173. Arg178 serves as a coordination point for dimethylallyl diphosphate. Isopentenyl diphosphate is bound at residue Arg179. Dimethylallyl diphosphate-binding residues include Lys266, Thr267, Gln306, Lys323, and Lys332. Lys353 bears the N6-acetyllysine mark.

The protein belongs to the FPP/GGPP synthase family. Homodimer. Interacts with RSAD2. In terms of assembly, (Microbial infection) Interacts with HTLV-1 protein p13(II). It depends on Mg(2+) as a cofactor.

It localises to the cytoplasm. The catalysed reaction is isopentenyl diphosphate + dimethylallyl diphosphate = (2E)-geranyl diphosphate + diphosphate. It catalyses the reaction isopentenyl diphosphate + (2E)-geranyl diphosphate = (2E,6E)-farnesyl diphosphate + diphosphate. Its pathway is isoprenoid biosynthesis; farnesyl diphosphate biosynthesis; farnesyl diphosphate from geranyl diphosphate and isopentenyl diphosphate: step 1/1. The protein operates within isoprenoid biosynthesis; geranyl diphosphate biosynthesis; geranyl diphosphate from dimethylallyl diphosphate and isopentenyl diphosphate: step 1/1. Its activity is regulated as follows. Inactivated by interferon-induced RSAD2. This inactivation may result of disruption of lipid rafts at the plasma membrane, and thus have an antiviral effect since many enveloped viruses need lipid rafts to bud efficiently out of the cell. In terms of biological role, key enzyme in isoprenoid biosynthesis which catalyzes the formation of farnesyl diphosphate (FPP), a precursor for several classes of essential metabolites including sterols, dolichols, carotenoids, and ubiquinones. FPP also serves as substrate for protein farnesylation and geranylgeranylation. Catalyzes the sequential condensation of isopentenyl pyrophosphate with the allylic pyrophosphates, dimethylallyl pyrophosphate, and then with the resultant geranylpyrophosphate to the ultimate product farnesyl pyrophosphate. This is Farnesyl pyrophosphate synthase from Homo sapiens (Human).